Reading from the N-terminus, the 1065-residue chain is Outer capsid protein VP3 (1065 aa).

The protein localises to the virion. It catalyses the reaction a 5'-end diphospho-ribonucleoside in mRNA + GTP + H(+) = a 5'-end (5'-triphosphoguanosine)-ribonucleoside in mRNA + diphosphate. The catalysed reaction is a 5'-end (5'-triphosphoguanosine)-ribonucleoside in mRNA + S-adenosyl-L-methionine = a 5'-end (N(7)-methyl 5'-triphosphoguanosine)-ribonucleoside in mRNA + S-adenosyl-L-homocysteine. Outer capsid protein involved in mRNA capping. Catalyzes the last 3 enzymatic activities for formation of the 5' cap structure on the viral plus-strand transcripts, namely the RNA guanylyltransferase, RNA-7N- and RNA-2'O-methyltransferase activities. This chain is Outer capsid protein VP3 (S3), found in Cryphonectria parasitica mycoreovirus 1 (strain 9B21) (CpMYRV-1).